The sequence spans 369 residues: MSGNTLGTLFTVTTFGESHGPAIGCVIDGCPPGMALTEADVQLELDRRKPGTSRHVTQRQEPDQVEILSGVFEGVTTGAPIALLIRNTDQRSKDYGNIAETFRPGHADYTYWQKYGVRDYRGGGRSSARLTAPVVGAGAIAKKWLCERFGVEVRGYMSALGEIEIPFVDWSHVRENPFFAPNADIVPQLEDYMDALRKDGDSIGARIDVVASGVPVGWGEPLFDRLDADIAHAMMGINAVKGVEIGAGFASVAQRGSVHGDELTPDGFVGNHAGGVLGGISTGQDITVSIAIKPTSSIRTPRRSITRAGEPAVVETFGRHDPCVGIRATPIAESMLALVLIDHALRHRAQCGDVSSATPRIAARAPDAQ.

NADP(+) is bound by residues arginine 48 and arginine 54. FMN contacts are provided by residues 125–127 (RSS), 238–239 (NA), glycine 278, 293–297 (KPTSS), and arginine 319.

This sequence belongs to the chorismate synthase family. Homotetramer. It depends on FMNH2 as a cofactor.

The catalysed reaction is 5-O-(1-carboxyvinyl)-3-phosphoshikimate = chorismate + phosphate. It participates in metabolic intermediate biosynthesis; chorismate biosynthesis; chorismate from D-erythrose 4-phosphate and phosphoenolpyruvate: step 7/7. Its function is as follows. Catalyzes the anti-1,4-elimination of the C-3 phosphate and the C-6 proR hydrogen from 5-enolpyruvylshikimate-3-phosphate (EPSP) to yield chorismate, which is the branch point compound that serves as the starting substrate for the three terminal pathways of aromatic amino acid biosynthesis. This reaction introduces a second double bond into the aromatic ring system. This chain is Chorismate synthase, found in Burkholderia mallei (strain NCTC 10229).